A 140-amino-acid chain; its full sequence is Organic hydroperoxide resistance protein-like (140 aa).

It belongs to the OsmC/Ohr family.

This is Organic hydroperoxide resistance protein-like from Mycoplasma genitalium (strain ATCC 33530 / DSM 19775 / NCTC 10195 / G37) (Mycoplasmoides genitalium).